A 226-amino-acid chain; its full sequence is NEDD8-specific protease 1 (226 aa).

This sequence belongs to the peptidase C48 family.

Processes the pre-form of the ubiquitin-like protein NEDD8/RUB1. Has the capacity to discriminate between NEDD8/RUB1 and ubiquitin. Has no SUMO protease activity. This Arabidopsis thaliana (Mouse-ear cress) protein is NEDD8-specific protease 1 (NEDP1).